A 328-amino-acid polypeptide reads, in one-letter code: Renalase (328 aa).

FAD contacts are provided by residues alanine 13, 32-33 (DK), arginine 40, and 56-57 (QY). Substrate contacts are provided by residues 57–61 (YFTAR) and 96–98 (SPD). An FAD-binding site is contributed by isoleucine 128. Threonine 185 provides a ligand contact to substrate. Aspartate 302 provides a ligand contact to FAD. Arginine 308 provides a ligand contact to substrate. Valine 309 provides a ligand contact to FAD.

This sequence belongs to the bacterial renalase family. FAD serves as cofactor.

It carries out the reaction 1,2-dihydro-beta-NAD + O2 + H(+) = H2O2 + NAD(+). The enzyme catalyses 1,2-dihydro-beta-NADP + O2 + H(+) = H2O2 + NADP(+). It catalyses the reaction 1,6-dihydro-beta-NADP + O2 + H(+) = H2O2 + NADP(+). The catalysed reaction is 1,6-dihydro-beta-NAD + O2 + H(+) = H2O2 + NAD(+). Functionally, catalyzes the oxidation of the 1,2-dihydro- and 1,6-dihydro- isomeric forms of beta-NAD(P) back to beta-NAD(P)+. Has a preference for 1,2-dihydro-beta-NAD as substrate. May serve to protect primary metabolism dehydrogenases from inhibition by the 1,2-dihydro- and 1,6-dihydro-beta-NAD(P) isomers. The chain is Renalase from Pseudomonas syringae pv. tomato (strain ATCC BAA-871 / DC3000).